A 215-amino-acid polypeptide reads, in one-letter code: Large ribosomal subunit protein uL4c (215 aa).

The span at Ser48–Lys57 shows a compositional bias: polar residues. Residues Ser48 to Ser85 form a disordered region. Over residues Gly65–Gly76 the composition is skewed to basic residues.

Belongs to the universal ribosomal protein uL4 family. Part of the 50S ribosomal subunit.

Its subcellular location is the plastid. The protein localises to the chloroplast. Functionally, probably binds the 23S rRNA. The protein is Large ribosomal subunit protein uL4c (rpl4) of Trieres chinensis (Marine centric diatom).